The chain runs to 505 residues: L-arabinose isomerase (505 aa).

The Mn(2+) site is built by Glu-310, Glu-337, His-354, and His-453.

This sequence belongs to the arabinose isomerase family. The cofactor is Mn(2+).

The enzyme catalyses beta-L-arabinopyranose = L-ribulose. The protein operates within carbohydrate degradation; L-arabinose degradation via L-ribulose; D-xylulose 5-phosphate from L-arabinose (bacterial route): step 1/3. Catalyzes the conversion of L-arabinose to L-ribulose. This is L-arabinose isomerase from Clavibacter sepedonicus (Clavibacter michiganensis subsp. sepedonicus).